The chain runs to 84 residues: uncharacterized protein (84 aa).

Residues 5-31 (KIQEIINELDNLMNRERKYIELVATVE) adopt a coiled-coil conformation.

This is an uncharacterized protein from Methanocaldococcus jannaschii (strain ATCC 43067 / DSM 2661 / JAL-1 / JCM 10045 / NBRC 100440) (Methanococcus jannaschii).